Consider the following 39-residue polypeptide: Cytochrome b6-f complex subunit 5 (39 aa).

Residues 5 to 25 (LLCGIVLGLVPITLLGLFVSA) traverse the membrane as a helical segment.

Belongs to the PetG family. As to quaternary structure, the 4 large subunits of the cytochrome b6-f complex are cytochrome b6, subunit IV (17 kDa polypeptide, PetD), cytochrome f and the Rieske protein, while the 4 small subunits are PetG, PetL, PetM and PetN. The complex functions as a dimer.

It is found in the cellular thylakoid membrane. Component of the cytochrome b6-f complex, which mediates electron transfer between photosystem II (PSII) and photosystem I (PSI), cyclic electron flow around PSI, and state transitions. PetG is required for either the stability or assembly of the cytochrome b6-f complex. This Prochlorococcus marinus (strain MIT 9515) protein is Cytochrome b6-f complex subunit 5.